Here is a 110-residue protein sequence, read N- to C-terminus: Large ribosomal subunit protein uL24 (110 aa).

This sequence belongs to the universal ribosomal protein uL24 family. As to quaternary structure, part of the 50S ribosomal subunit.

Functionally, one of two assembly initiator proteins, it binds directly to the 5'-end of the 23S rRNA, where it nucleates assembly of the 50S subunit. In terms of biological role, one of the proteins that surrounds the polypeptide exit tunnel on the outside of the subunit. The polypeptide is Large ribosomal subunit protein uL24 (Chloroflexus aggregans (strain MD-66 / DSM 9485)).